Here is a 348-residue protein sequence, read N- to C-terminus: Mannonate dehydratase (348 aa).

This sequence belongs to the mannonate dehydratase family. It depends on Fe(2+) as a cofactor. Mn(2+) serves as cofactor.

It carries out the reaction D-mannonate = 2-dehydro-3-deoxy-D-gluconate + H2O. Its pathway is carbohydrate metabolism; pentose and glucuronate interconversion. In terms of biological role, catalyzes the dehydration of D-mannonate. The protein is Mannonate dehydratase of Streptococcus uberis (strain ATCC BAA-854 / 0140J).